The following is a 255-amino-acid chain: Small ribosomal subunit protein uS2 (255 aa).

It belongs to the universal ribosomal protein uS2 family.

This Streptococcus thermophilus (strain ATCC BAA-491 / LMD-9) protein is Small ribosomal subunit protein uS2.